Reading from the N-terminus, the 874-residue chain is DNA mismatch repair protein MutS (874 aa).

ATP is bound at residue 613–620 (GPNMGGKS). A disordered region spans residues 799 to 820 (EAGSTPSPAPVSVNEPKPAAPT).

This sequence belongs to the DNA mismatch repair MutS family.

This protein is involved in the repair of mismatches in DNA. It is possible that it carries out the mismatch recognition step. This protein has a weak ATPase activity. The chain is DNA mismatch repair protein MutS from Marinobacter nauticus (strain ATCC 700491 / DSM 11845 / VT8) (Marinobacter aquaeolei).